The primary structure comprises 125 residues: Snaclec B7 (125 aa).

Cystine bridges form between Cys2–Cys13, Cys30–Cys119, and Cys96–Cys111. The region spanning 9–120 is the C-type lectin domain; the sequence is HEGHCYKVFK…CNISQYFVCQ (112 aa). A glycan (N-linked (GlcNAc...) asparagine) is linked at Asn112.

This sequence belongs to the snaclec family. Heterodimer; disulfide-linked. In terms of tissue distribution, expressed by the venom gland.

Its subcellular location is the secreted. Interferes with one step of hemostasis (modulation of platelet aggregation, or coagulation cascade, for example). This is Snaclec B7 from Macrovipera lebetinus (Levantine viper).